The sequence spans 214 residues: YINYKNMSHQHMLMMFNLLPVGSNISIWWNFGSMLLTCLVIQIMTGFFLAFHYTANINLAFSSIIHTSRDVPYGWIMQNTHAIGASLFFICIYIHIARGIYYGSYLNKEVWVSGTTLLILLMATAFFGYVLPWGQMSFWAATVITNLLTAIPYFGTTLTTWLWGGFAINDPTLTRFFALHFILPFTIISASSIHILLLHNEGSNNPLGSNSDID.

The next 4 membrane-spanning stretches (helical) occupy residues 31–51 (FGSM…FLAF), 75–96 (WIMQ…YIHI), 111–131 (WVSG…GYVL), and 176–196 (FFAL…IHIL). Positions 81 and 95 each coordinate heme b. Heme b contacts are provided by histidine 180 and histidine 194. Histidine 199 provides a ligand contact to a ubiquinone.

This sequence belongs to the cytochrome b family. In terms of assembly, the cytochrome bc1 complex contains 3 respiratory subunits (MT-CYB, CYC1 and UQCRFS1), 2 core proteins (UQCRC1 and UQCRC2) and probably 6 low-molecular weight proteins. The cofactor is heme b.

The protein resides in the mitochondrion inner membrane. In terms of biological role, component of the ubiquinol-cytochrome c reductase complex (complex III or cytochrome b-c1 complex) that is part of the mitochondrial respiratory chain. The b-c1 complex mediates electron transfer from ubiquinol to cytochrome c. Contributes to the generation of a proton gradient across the mitochondrial membrane that is then used for ATP synthesis. The protein is Cytochrome b (MT-CYB) of Gloydius blomhoffii (Mamushi).